Here is a 349-residue protein sequence, read N- to C-terminus: Ion-translocating oxidoreductase complex subunit D (349 aa).

3 consecutive transmembrane segments (helical) span residues 20 to 42 (VMQRVILCLLPGLVVQCAFFGWG), 77 to 99 (SAMLTAILIGVAIPPLAPWWMIV), and 124 to 144 (AMAAYVLLLVSFPVQMTTWIA). Thr-185 carries the post-translational modification FMN phosphoryl threonine. 5 helical membrane-spanning segments follow: residues 212–232 (STGVGWFWVNLAYLAGGLVLL), 239–259 (WHISTGVLLGLFVASSIGFLL), 265–285 (ASPLMHLFSGATMLAAFFIAT), 291–311 (ATSSRGRIIFGALIGVLVYII), and 315–335 (GGYPDAFAFAVLLANLCAPFI).

It belongs to the NqrB/RnfD family. The complex is composed of six subunits: RnfA, RnfB, RnfC, RnfD, RnfE and RnfG. It depends on FMN as a cofactor.

It localises to the cell inner membrane. Functionally, part of a membrane-bound complex that couples electron transfer with translocation of ions across the membrane. The protein is Ion-translocating oxidoreductase complex subunit D of Shewanella baltica (strain OS223).